The sequence spans 161 residues: GTP-dependent dephospho-CoA kinase (161 aa).

GTP contacts are provided by Asp40, Val41, Val42, Asp59, Glu112, and Glu135.

Belongs to the GTP-dependent DPCK family.

It carries out the reaction 3'-dephospho-CoA + GTP = GDP + CoA + H(+). The protein operates within cofactor biosynthesis; coenzyme A biosynthesis. In terms of biological role, catalyzes the GTP-dependent phosphorylation of the 3'-hydroxyl group of dephosphocoenzyme A to form coenzyme A (CoA). This chain is GTP-dependent dephospho-CoA kinase, found in Methanocorpusculum labreanum (strain ATCC 43576 / DSM 4855 / Z).